A 244-amino-acid polypeptide reads, in one-letter code: Probable transcriptional regulatory protein CBU_1566 (244 aa).

This sequence belongs to the TACO1 family.

The protein localises to the cytoplasm. The protein is Probable transcriptional regulatory protein CBU_1566 of Coxiella burnetii (strain RSA 493 / Nine Mile phase I).